A 246-amino-acid polypeptide reads, in one-letter code: NAD-dependent protein deacylase (246 aa).

One can recognise a Deacetylase sirtuin-type domain in the interval 1–245 (MKEFITKHRD…ELIREILDNP (245 aa)). 20 to 39 (GAGISAESGIPTFRGSEGLW) contributes to the NAD(+) binding site. The substrate site is built by Tyr64 and Arg67. An NAD(+)-binding site is contributed by 98–101 (QNVD). His116 serves as the catalytic Proton acceptor. Zn(2+) contacts are provided by Cys124, Cys127, Cys146, and Cys149. NAD(+)-binding positions include 186–188 (GTS), 212–214 (NPE), and Thr230.

The protein belongs to the sirtuin family. Class III subfamily. The cofactor is Zn(2+).

Its subcellular location is the cytoplasm. It carries out the reaction N(6)-acetyl-L-lysyl-[protein] + NAD(+) + H2O = 2''-O-acetyl-ADP-D-ribose + nicotinamide + L-lysyl-[protein]. It catalyses the reaction N(6)-succinyl-L-lysyl-[protein] + NAD(+) + H2O = 2''-O-succinyl-ADP-D-ribose + nicotinamide + L-lysyl-[protein]. Its function is as follows. NAD-dependent lysine deacetylase and desuccinylase that specifically removes acetyl and succinyl groups on target proteins. Modulates the activities of several proteins which are inactive in their acylated form. This Leptospira interrogans serogroup Icterohaemorrhagiae serovar Lai (strain 56601) protein is NAD-dependent protein deacylase.